The following is a 638-amino-acid chain: 1-deoxy-D-xylulose-5-phosphate synthase (638 aa).

Thiamine diphosphate is bound by residues His72 and 113 to 115; that span reads GHA. Asp144 contributes to the Mg(2+) binding site. Residues 145–146, Asn174, Tyr287, and Glu370 each bind thiamine diphosphate; that span reads GA. Residue Asn174 coordinates Mg(2+).

Belongs to the transketolase family. DXPS subfamily. In terms of assembly, homodimer. It depends on Mg(2+) as a cofactor. The cofactor is thiamine diphosphate.

The enzyme catalyses D-glyceraldehyde 3-phosphate + pyruvate + H(+) = 1-deoxy-D-xylulose 5-phosphate + CO2. It participates in metabolic intermediate biosynthesis; 1-deoxy-D-xylulose 5-phosphate biosynthesis; 1-deoxy-D-xylulose 5-phosphate from D-glyceraldehyde 3-phosphate and pyruvate: step 1/1. In terms of biological role, catalyzes the acyloin condensation reaction between C atoms 2 and 3 of pyruvate and glyceraldehyde 3-phosphate to yield 1-deoxy-D-xylulose-5-phosphate (DXP). The polypeptide is 1-deoxy-D-xylulose-5-phosphate synthase (Picosynechococcus sp. (strain ATCC 27264 / PCC 7002 / PR-6) (Agmenellum quadruplicatum)).